A 252-amino-acid polypeptide reads, in one-letter code: 2-C-methyl-D-erythritol 4-phosphate cytidylyltransferase (252 aa).

The protein belongs to the IspD/TarI cytidylyltransferase family. IspD subfamily.

The catalysed reaction is 2-C-methyl-D-erythritol 4-phosphate + CTP + H(+) = 4-CDP-2-C-methyl-D-erythritol + diphosphate. It functions in the pathway isoprenoid biosynthesis; isopentenyl diphosphate biosynthesis via DXP pathway; isopentenyl diphosphate from 1-deoxy-D-xylulose 5-phosphate: step 2/6. Functionally, catalyzes the formation of 4-diphosphocytidyl-2-C-methyl-D-erythritol from CTP and 2-C-methyl-D-erythritol 4-phosphate (MEP). This is 2-C-methyl-D-erythritol 4-phosphate cytidylyltransferase from Chlorobium phaeobacteroides (strain BS1).